We begin with the raw amino-acid sequence, 194 residues long: Phosphoheptose isomerase (194 aa).

The region spanning 37 to 194 (IAKSFKNKNK…IIEKEMKKIN (158 aa)) is the SIS domain. 52 to 54 (NGG) contacts substrate. Residues His-61 and Glu-65 each coordinate Zn(2+). Substrate contacts are provided by residues Glu-65, 93–94 (ND), 119–121 (STS), Ser-124, and Gln-172. 2 residues coordinate Zn(2+): Gln-172 and His-180.

This sequence belongs to the SIS family. GmhA subfamily. In terms of assembly, homotetramer. Zn(2+) is required as a cofactor.

The protein resides in the cytoplasm. It catalyses the reaction 2 D-sedoheptulose 7-phosphate = D-glycero-alpha-D-manno-heptose 7-phosphate + D-glycero-beta-D-manno-heptose 7-phosphate. Its pathway is carbohydrate biosynthesis; D-glycero-D-manno-heptose 7-phosphate biosynthesis; D-glycero-alpha-D-manno-heptose 7-phosphate and D-glycero-beta-D-manno-heptose 7-phosphate from sedoheptulose 7-phosphate: step 1/1. Functionally, catalyzes the isomerization of sedoheptulose 7-phosphate in D-glycero-D-manno-heptose 7-phosphate. The polypeptide is Phosphoheptose isomerase (Buchnera aphidicola subsp. Schizaphis graminum (strain Sg)).